The following is a 364-amino-acid chain: Isopentenyl-diphosphate delta-isomerase (364 aa).

Basic and acidic residues predominate over residues 1-13 (MSSAQRKDDHVRL). The segment at 1–24 (MSSAQRKDDHVRLATEQQRAHSGR) is disordered. Substrate is bound at residue 6–7 (RK). FMN-binding positions include 64-66 (AMT), S94, and N123. 94–96 (SMH) provides a ligand contact to substrate. Position 153 (Q153) interacts with substrate. Residue E154 participates in Mg(2+) binding. Residues K185, S210, T215, 259 to 261 (GIR), and 280 to 281 (SG) each bind FMN.

The protein belongs to the IPP isomerase type 2 family. As to quaternary structure, homooctamer. Dimer of tetramers. The cofactor is FMN. Requires NADPH as cofactor. It depends on Mg(2+) as a cofactor.

It is found in the cytoplasm. It carries out the reaction isopentenyl diphosphate = dimethylallyl diphosphate. Its function is as follows. Involved in the biosynthesis of isoprenoids. Catalyzes the 1,3-allylic rearrangement of the homoallylic substrate isopentenyl (IPP) to its allylic isomer, dimethylallyl diphosphate (DMAPP). The polypeptide is Isopentenyl-diphosphate delta-isomerase (Kitasatospora griseola (Streptomyces griseolosporeus)).